A 200-amino-acid chain; its full sequence is Large ribosomal subunit protein bL25 (200 aa).

This sequence belongs to the bacterial ribosomal protein bL25 family. CTC subfamily. As to quaternary structure, part of the 50S ribosomal subunit; part of the 5S rRNA/L5/L18/L25 subcomplex. Contacts the 5S rRNA. Binds to the 5S rRNA independently of L5 and L18.

Its function is as follows. This is one of the proteins that binds to the 5S RNA in the ribosome where it forms part of the central protuberance. The sequence is that of Large ribosomal subunit protein bL25 from Pseudomonas fluorescens (strain SBW25).